The following is a 158-amino-acid chain: Cyclic pyranopterin monophosphate synthase (158 aa).

Substrate contacts are provided by residues 75–77 (LCH) and 111–112 (ME). Aspartate 126 is a catalytic residue.

This sequence belongs to the MoaC family. As to quaternary structure, homohexamer; trimer of dimers.

It catalyses the reaction (8S)-3',8-cyclo-7,8-dihydroguanosine 5'-triphosphate = cyclic pyranopterin phosphate + diphosphate. The protein operates within cofactor biosynthesis; molybdopterin biosynthesis. Its function is as follows. Catalyzes the conversion of (8S)-3',8-cyclo-7,8-dihydroguanosine 5'-triphosphate to cyclic pyranopterin monophosphate (cPMP). The sequence is that of Cyclic pyranopterin monophosphate synthase from Caulobacter vibrioides (strain ATCC 19089 / CIP 103742 / CB 15) (Caulobacter crescentus).